Here is a 182-residue protein sequence, read N- to C-terminus: MDIILATSSPRRINLLKMLNIKFKTVAPRIKENINETDPEKLVKKLSKLKALSIKEKGIIISADTIVYHNNKVLGKPKNLDNAFNMLKELSSKWHTVYTGVTIIEKDDIITFCEKTMVKFKKLSDELIRYYISTSKPLDKAGAYGIQELGAILVEKIEGDYYNVVGLPISRIWDILWDRRII.

Asp64 serves as the catalytic Proton acceptor.

Belongs to the Maf family. YhdE subfamily. A divalent metal cation is required as a cofactor.

The protein localises to the cytoplasm. The catalysed reaction is dTTP + H2O = dTMP + diphosphate + H(+). It catalyses the reaction UTP + H2O = UMP + diphosphate + H(+). Functionally, nucleoside triphosphate pyrophosphatase that hydrolyzes dTTP and UTP. May have a dual role in cell division arrest and in preventing the incorporation of modified nucleotides into cellular nucleic acids. The protein is dTTP/UTP pyrophosphatase of Thermosipho melanesiensis (strain DSM 12029 / CIP 104789 / BI429).